The primary structure comprises 679 residues: Kelch-like protein diablo (679 aa).

Over residues 1-48 the composition is skewed to gly residues; sequence MGDLPGGGGGAAGGAGAAGGGGGGGNGAAGSSSSGGGASGSGGGGPGS. Residues 1–84 are disordered; that stretch reads MGDLPGGGGG…RLSHTSEKHP (84 aa). A BTB domain is found at 101 to 168; it reads CDVVLNVGGR…CYTAHIIVEE (68 aa). In terms of domain architecture, BACK spans 203-305; it reads CLGIRAFADT…SPKFLVGTVG (103 aa). 6 Kelch repeats span residues 352–398, 400–446, 447–493, 495–540, 542–587, and 588–634; these read VLFA…VLND, LYAV…VLDG, FLYA…VLGG, LYAI…VFNN, IYAV…VVNG, and QLYA…VMRA. Residues 643–679 are disordered; sequence CDNNSSNNNNNNYNLKHQQQQPQQQQQQQQQQTQQQL. Residues 645-679 are compositionally biased toward low complexity; that stretch reads NNSSNNNNNNYNLKHQQQQPQQQQQQQQQQTQQQL.

It functions in the pathway protein modification; protein ubiquitination. Functionally, probable substrate-specific adapter of an E3 ubiquitin-protein ligase complex which mediates the ubiquitination and subsequent proteasomal degradation of target proteins. May have a role in synapse differentiation and growth. The protein is Kelch-like protein diablo of Drosophila willistoni (Fruit fly).